The following is a 149-amino-acid chain: Phosphoribosyl-AMP cyclohydrolase (149 aa).

D92 is a binding site for Mg(2+). C93 is a Zn(2+) binding site. Positions 94 and 96 each coordinate Mg(2+). Positions 111 and 118 each coordinate Zn(2+).

The protein belongs to the PRA-CH family. In terms of assembly, homodimer. The cofactor is Mg(2+). It depends on Zn(2+) as a cofactor.

The protein resides in the cytoplasm. The enzyme catalyses 1-(5-phospho-beta-D-ribosyl)-5'-AMP + H2O = 1-(5-phospho-beta-D-ribosyl)-5-[(5-phospho-beta-D-ribosylamino)methylideneamino]imidazole-4-carboxamide. Its pathway is amino-acid biosynthesis; L-histidine biosynthesis; L-histidine from 5-phospho-alpha-D-ribose 1-diphosphate: step 3/9. Catalyzes the hydrolysis of the adenine ring of phosphoribosyl-AMP. The sequence is that of Phosphoribosyl-AMP cyclohydrolase from Rhizobium rhizogenes (strain K84 / ATCC BAA-868) (Agrobacterium radiobacter).